Consider the following 489-residue polypeptide: L-arabinose isomerase (489 aa).

Mn(2+) contacts are provided by Glu-300, Glu-325, His-342, and His-441.

Belongs to the arabinose isomerase family. Mn(2+) is required as a cofactor.

The catalysed reaction is beta-L-arabinopyranose = L-ribulose. It participates in carbohydrate degradation; L-arabinose degradation via L-ribulose; D-xylulose 5-phosphate from L-arabinose (bacterial route): step 1/3. Catalyzes the conversion of L-arabinose to L-ribulose. The sequence is that of L-arabinose isomerase from Clostridium beijerinckii (strain ATCC 51743 / NCIMB 8052) (Clostridium acetobutylicum).